Here is a 241-residue protein sequence, read N- to C-terminus: ATP synthase subunit a (241 aa).

The next 5 helical transmembrane spans lie at 21 to 41 (LASI…AIAC), 84 to 104 (VTLI…AIVI), 116 to 136 (DATV…YYGI), 183 to 203 (ILIG…WIIG), and 207 to 227 (LIAW…IFIM).

This sequence belongs to the ATPase A chain family. In terms of assembly, F-type ATPases have 2 components, CF(1) - the catalytic core - and CF(0) - the membrane proton channel. CF(1) has five subunits: alpha(3), beta(3), gamma(1), delta(1), epsilon(1). CF(0) has three main subunits: a(1), b(2) and c(9-12). The alpha and beta chains form an alternating ring which encloses part of the gamma chain. CF(1) is attached to CF(0) by a central stalk formed by the gamma and epsilon chains, while a peripheral stalk is formed by the delta and b chains.

It localises to the cell membrane. In terms of biological role, key component of the proton channel; it plays a direct role in the translocation of protons across the membrane. In Staphylococcus carnosus (strain TM300), this protein is ATP synthase subunit a.